Consider the following 238-residue polypeptide: 14-3-3 protein 2 (238 aa).

The protein belongs to the 14-3-3 family.

Probable adapter protein. The sequence is that of 14-3-3 protein 2 from Entamoeba histolytica (strain ATCC 30459 / HM-1:IMSS / ABRM).